Here is a 69-residue protein sequence, read N- to C-terminus: UPF0270 protein VCM66_2532 (69 aa).

This sequence belongs to the UPF0270 family.

This Vibrio cholerae serotype O1 (strain M66-2) protein is UPF0270 protein VCM66_2532.